Consider the following 692-residue polypeptide: Proprotein convertase subtilisin/kexin type 9 (692 aa).

Positions 1-30 are cleaved as a signal peptide; that stretch reads MGTVSSRRSWWPLPLPLLLLLLLGLAGARA. Positions 31-152 are excised as a propeptide; that stretch reads QEDEDGDYEE…IEEDSSVFAQ (122 aa). Sulfotyrosine is present on Y38. S47 carries the post-translational modification Phosphoserine. The Inhibitor I9 domain occupies 77-149; that stretch reads TYVVVLKEET…VDYIEEDSSV (73 aa). The Peptidase S8 domain occupies 155–444; it reads PWNLERITPA…VLTPNLVAAL (290 aa). Catalysis depends on charge relay system residues D186 and H226. Disulfide bonds link C223-C255 and C323-C358. S386 (charge relay system) is an active-site residue. The interval 450–692 is C-terminal domain; sequence RAGWQLFCRT…HLVQASQELQ (243 aa). 3 cysteine pairs are disulfide-bonded: C457–C527, C477–C526, and C486–C509. N533 is a glycosylation site (N-linked (GlcNAc...) asparagine). 6 disulfides stabilise this stretch: C534-C601, C552-C600, C562-C588, C608-C679, C626-C678, and C635-C654. S688 carries the phosphoserine modification.

It belongs to the peptidase S8 family. As to quaternary structure, monomer. Can self-associate to form dimers and higher multimers which may have increased LDLR degrading activity. The precursor protein but not the mature protein may form multimers. Interacts with APOB, VLDLR, LRP8/APOER2 and BACE1. The full-length immature form (pro-PCSK9) interacts with SCNN1A, SCNN1B and SCNN1G. The pro-PCSK9 form (via C-terminal domain) interacts with LDLR. Interacts (via the C-terminal domain) with ANXA2 (via repeat Annexin 1); the interaction inhibits the degradation of LDLR. Ca(2+) serves as cofactor. In terms of processing, cleavage by furin and PCSK5 generates a truncated inactive protein that is unable to induce LDLR degradation. Post-translationally, undergoes autocatalytic cleavage in the endoplasmic reticulum to release the propeptide from the N-terminus and the cleavage of the propeptide is strictly required for its maturation and activation. The cleaved propeptide however remains associated with the catalytic domain through non-covalent interactions, preventing potential substrates from accessing its active site. As a result, it is secreted from cells as a propeptide-containing, enzymatically inactive protein. Phosphorylation protects the propeptide against proteolysis.

The protein localises to the cytoplasm. It is found in the secreted. It localises to the endosome. The protein resides in the lysosome. Its subcellular location is the cell surface. The protein localises to the endoplasmic reticulum. It is found in the golgi apparatus. Its activity is regulated as follows. Its proteolytic activity is autoinhibited by the non-covalent binding of the propeptide to the catalytic domain. Inhibited by EGTA. In terms of biological role, crucial player in the regulation of plasma cholesterol homeostasis. Binds to low-density lipid receptor family members: low density lipoprotein receptor (LDLR), very low density lipoprotein receptor (VLDLR), apolipoprotein E receptor (LRP1/APOER) and apolipoprotein receptor 2 (LRP8/APOER2), and promotes their degradation in intracellular acidic compartments. Acts via a non-proteolytic mechanism to enhance the degradation of the hepatic LDLR through a clathrin LDLRAP1/ARH-mediated pathway. May prevent the recycling of LDLR from endosomes to the cell surface or direct it to lysosomes for degradation. Can induce ubiquitination of LDLR leading to its subsequent degradation. Inhibits intracellular degradation of APOB via the autophagosome/lysosome pathway in a LDLR-independent manner. Involved in the disposal of non-acetylated intermediates of BACE1 in the early secretory pathway. Inhibits epithelial Na(+) channel (ENaC)-mediated Na(+) absorption by reducing ENaC surface expression primarily by increasing its proteasomal degradation. Regulates neuronal apoptosis via modulation of LRP8/APOER2 levels and related anti-apoptotic signaling pathways. The chain is Proprotein convertase subtilisin/kexin type 9 (PCSK9) from Colobus guereza (Mantled guereza).